A 375-amino-acid polypeptide reads, in one-letter code: Coproporphyrin III ferrochelatase (375 aa).

Residues S59 and Y128 each contribute to the Fe-coproporphyrin III site. Residues H191 and E286 each contribute to the Fe(2+) site.

It belongs to the ferrochelatase family.

It is found in the cytoplasm. It catalyses the reaction Fe-coproporphyrin III + 2 H(+) = coproporphyrin III + Fe(2+). Its pathway is porphyrin-containing compound metabolism; protoheme biosynthesis. In terms of biological role, involved in coproporphyrin-dependent heme b biosynthesis. Catalyzes the insertion of ferrous iron into coproporphyrin III to form Fe-coproporphyrin III. This chain is Coproporphyrin III ferrochelatase, found in Streptomyces coelicolor (strain ATCC BAA-471 / A3(2) / M145).